The primary structure comprises 468 residues: Phosphoglucosamine mutase (468 aa).

Residue S112 is the Phosphoserine intermediate of the active site. Positions 112, 254, 256, and 258 each coordinate Mg(2+). S112 bears the Phosphoserine mark.

This sequence belongs to the phosphohexose mutase family. The cofactor is Mg(2+). Activated by phosphorylation.

It catalyses the reaction alpha-D-glucosamine 1-phosphate = D-glucosamine 6-phosphate. Functionally, catalyzes the conversion of glucosamine-6-phosphate to glucosamine-1-phosphate. This is Phosphoglucosamine mutase from Prochlorococcus marinus (strain MIT 9303).